A 644-amino-acid chain; its full sequence is Acetyl-coenzyme A synthetase (644 aa).

CoA contacts are provided by residues 189-192 (RGGK) and T307. Residues 383 to 385 (GEP), 407 to 412 (DTWWQT), D496, and R511 contribute to the ATP site. Position 519 (S519) interacts with CoA. R522 contacts ATP. 3 residues coordinate Mg(2+): V533, H535, and V538. CoA is bound at residue R580. N6-acetyllysine is present on K605.

It belongs to the ATP-dependent AMP-binding enzyme family. It depends on Mg(2+) as a cofactor. Acetylated. Deacetylation by the SIR2-homolog deacetylase activates the enzyme.

It catalyses the reaction acetate + ATP + CoA = acetyl-CoA + AMP + diphosphate. In terms of biological role, catalyzes the conversion of acetate into acetyl-CoA (AcCoA), an essential intermediate at the junction of anabolic and catabolic pathways. AcsA undergoes a two-step reaction. In the first half reaction, AcsA combines acetate with ATP to form acetyl-adenylate (AcAMP) intermediate. In the second half reaction, it can then transfer the acetyl group from AcAMP to the sulfhydryl group of CoA, forming the product AcCoA. This is Acetyl-coenzyme A synthetase from Rubrobacter xylanophilus (strain DSM 9941 / JCM 11954 / NBRC 16129 / PRD-1).